The chain runs to 645 residues: Translation factor GUF1 homolog, mitochondrial (645 aa).

The region spanning 40–215 (EKIRNFGIVA…AIVERVPAPT (176 aa)) is the tr-type G domain. Residues 49–56 (AHVDHGKS), 108–112 (DTPGH), and 162–165 (NKID) contribute to the GTP site.

The protein belongs to the TRAFAC class translation factor GTPase superfamily. Classic translation factor GTPase family. LepA subfamily.

The protein resides in the mitochondrion inner membrane. The catalysed reaction is GTP + H2O = GDP + phosphate + H(+). Promotes mitochondrial protein synthesis. May act as a fidelity factor of the translation reaction, by catalyzing a one-codon backward translocation of tRNAs on improperly translocated ribosomes. Binds to mitochondrial ribosomes in a GTP-dependent manner. This Caenorhabditis briggsae protein is Translation factor GUF1 homolog, mitochondrial.